The chain runs to 233 residues: Small ribosomal subunit protein uS3 (233 aa).

The 69-residue stretch at 39-107 folds into the KH type-2 domain; sequence VRKYLTKELE…PAQINIAEVR (69 aa).

It belongs to the universal ribosomal protein uS3 family. As to quaternary structure, part of the 30S ribosomal subunit. Forms a tight complex with proteins S10 and S14.

Functionally, binds the lower part of the 30S subunit head. Binds mRNA in the 70S ribosome, positioning it for translation. In Pectobacterium carotovorum subsp. carotovorum (strain PC1), this protein is Small ribosomal subunit protein uS3.